The primary structure comprises 135 residues: uncharacterized protein (135 aa).

A run of 3 helical transmembrane segments spans residues Ile12 to Ile32, Ser68 to Cys88, and Gly98 to Phe118.

It is found in the cell membrane. This is an uncharacterized protein from Methanocaldococcus jannaschii (strain ATCC 43067 / DSM 2661 / JAL-1 / JCM 10045 / NBRC 100440) (Methanococcus jannaschii).